The following is a 471-amino-acid chain: A-type ATP synthase subunit B (471 aa).

This sequence belongs to the ATPase alpha/beta chains family. Has multiple subunits with at least A(3), B(3), C, D, E, F, H, I and proteolipid K(x).

It localises to the cell membrane. Functionally, component of the A-type ATP synthase that produces ATP from ADP in the presence of a proton gradient across the membrane. The B chain is a regulatory subunit. This Natronomonas pharaonis (strain ATCC 35678 / DSM 2160 / CIP 103997 / JCM 8858 / NBRC 14720 / NCIMB 2260 / Gabara) (Halobacterium pharaonis) protein is A-type ATP synthase subunit B.